We begin with the raw amino-acid sequence, 296 residues long: Ribosomal protein L11 methyltransferase (296 aa).

4 residues coordinate S-adenosyl-L-methionine: Thr139, Gly163, Asp185, and Asn232.

The protein belongs to the methyltransferase superfamily. PrmA family.

It localises to the cytoplasm. It catalyses the reaction L-lysyl-[protein] + 3 S-adenosyl-L-methionine = N(6),N(6),N(6)-trimethyl-L-lysyl-[protein] + 3 S-adenosyl-L-homocysteine + 3 H(+). In terms of biological role, methylates ribosomal protein L11. The chain is Ribosomal protein L11 methyltransferase from Picosynechococcus sp. (strain ATCC 27264 / PCC 7002 / PR-6) (Agmenellum quadruplicatum).